Consider the following 184-residue polypeptide: Nucleoside triphosphate pyrophosphatase (184 aa).

The Proton acceptor role is filled by Asp66.

This sequence belongs to the Maf family. It depends on a divalent metal cation as a cofactor.

The protein resides in the cytoplasm. It carries out the reaction a ribonucleoside 5'-triphosphate + H2O = a ribonucleoside 5'-phosphate + diphosphate + H(+). The catalysed reaction is a 2'-deoxyribonucleoside 5'-triphosphate + H2O = a 2'-deoxyribonucleoside 5'-phosphate + diphosphate + H(+). In terms of biological role, nucleoside triphosphate pyrophosphatase. May have a dual role in cell division arrest and in preventing the incorporation of modified nucleotides into cellular nucleic acids. The protein is Nucleoside triphosphate pyrophosphatase of Prochlorococcus marinus (strain MIT 9313).